The sequence spans 261 residues: uncharacterized protein (261 aa).

The signal sequence occupies residues 1-22; sequence MGYSKRFALYISVMILIFAIAG. Cys23 carries the N-palmitoyl cysteine lipid modification. Cys23 carries S-diacylglycerol cysteine lipidation.

It belongs to the staphylococcal tandem lipoprotein family.

The protein resides in the cell membrane. This is an uncharacterized protein from Staphylococcus aureus (strain N315).